The sequence spans 239 residues: Pyridoxine 5'-phosphate synthase (239 aa).

Asn-7 serves as a coordination point for 3-amino-2-oxopropyl phosphate. 9 to 10 provides a ligand contact to 1-deoxy-D-xylulose 5-phosphate; the sequence is DH. 3-amino-2-oxopropyl phosphate is bound at residue Arg-18. His-43 acts as the Proton acceptor in catalysis. The 1-deoxy-D-xylulose 5-phosphate site is built by Arg-45 and His-50. The active-site Proton acceptor is the Glu-70. Thr-100 is a 1-deoxy-D-xylulose 5-phosphate binding site. His-191 acts as the Proton donor in catalysis. Residues Gly-192 and 213–214 each bind 3-amino-2-oxopropyl phosphate; that span reads GH.

The protein belongs to the PNP synthase family. As to quaternary structure, homooctamer; tetramer of dimers.

The protein resides in the cytoplasm. The enzyme catalyses 3-amino-2-oxopropyl phosphate + 1-deoxy-D-xylulose 5-phosphate = pyridoxine 5'-phosphate + phosphate + 2 H2O + H(+). Its pathway is cofactor biosynthesis; pyridoxine 5'-phosphate biosynthesis; pyridoxine 5'-phosphate from D-erythrose 4-phosphate: step 5/5. Catalyzes the complicated ring closure reaction between the two acyclic compounds 1-deoxy-D-xylulose-5-phosphate (DXP) and 3-amino-2-oxopropyl phosphate (1-amino-acetone-3-phosphate or AAP) to form pyridoxine 5'-phosphate (PNP) and inorganic phosphate. This is Pyridoxine 5'-phosphate synthase from Synechococcus sp. (strain JA-2-3B'a(2-13)) (Cyanobacteria bacterium Yellowstone B-Prime).